Here is a 101-residue protein sequence, read N- to C-terminus: Large ribosomal subunit protein uL23 (101 aa).

The protein belongs to the universal ribosomal protein uL23 family. In terms of assembly, part of the 50S ribosomal subunit. Contacts protein L29, and trigger factor when it is bound to the ribosome.

One of the early assembly proteins it binds 23S rRNA. One of the proteins that surrounds the polypeptide exit tunnel on the outside of the ribosome. Forms the main docking site for trigger factor binding to the ribosome. The protein is Large ribosomal subunit protein uL23 of Pseudarthrobacter chlorophenolicus (strain ATCC 700700 / DSM 12829 / CIP 107037 / JCM 12360 / KCTC 9906 / NCIMB 13794 / A6) (Arthrobacter chlorophenolicus).